The following is a 57-amino-acid chain: Defensin-like protein 302 (57 aa).

Cystine bridges form between C19–C39, C26–C44, and C32–C46.

The protein belongs to the DEFL family.

The polypeptide is Defensin-like protein 302 (Arabidopsis thaliana (Mouse-ear cress)).